We begin with the raw amino-acid sequence, 157 residues long: uncharacterized protein (157 aa).

The first 19 residues, 1-19 (MRKYLIILVLLLFLSSSFG), serve as a signal peptide directing secretion.

This is an uncharacterized protein from Methanocaldococcus jannaschii (strain ATCC 43067 / DSM 2661 / JAL-1 / JCM 10045 / NBRC 100440) (Methanococcus jannaschii).